Consider the following 871-residue polypeptide: Transient receptor potential cation channel subfamily V member 4 (871 aa).

2 disordered regions span residues methionine 1–arginine 68 and tyrosine 110–proline 143. At methionine 1 to valine 469 the chain is on the cytoplasmic side. Tyrosine 110 bears the Phosphotyrosine; by SRC-type Tyr-kinases mark. Positions histidine 116–glutamate 129 are enriched in basic and acidic residues. Residues lysine 192, lysine 197, asparagine 201, tyrosine 236 to glutamine 239, and arginine 248 each bind ATP. ANK repeat units lie at residues arginine 237–alanine 266 and phenylalanine 284–aspartate 313. A 1,2-diacyl-sn-glycero-3-phospho-(1D-myo-inositol-4,5-bisphosphate) is bound at residue arginine 249–lysine 251. Tyrosine 253 bears the Phosphotyrosine; by LYN mark. Residues asparagine 296–histidine 299 and lysine 344 each bind a 1,2-diacyl-sn-glycero-3-phospho-(1D-myo-inositol-4,5-bisphosphate). One copy of the ANK 3 repeat lies at aspartate 369 to aspartate 398. Residues serine 470 to tyrosine 490 traverse the membrane as a helical segment. The Extracellular segment spans residues tyrosine 491–aspartate 507. A helical transmembrane segment spans residues tyrosine 508–threonine 534. The Cytoplasmic portion of the chain corresponds to lysine 535–glycine 547. The chain crosses the membrane as a helical span at residues serine 548–leucine 568. Over alanine 569 to glutamate 572 the chain is Extracellular. The chain crosses the membrane as a helical span at residues alanine 573–threonine 593. The Cytoplasmic portion of the chain corresponds to arginine 594–lysine 608. A helical membrane pass occupies residues isoleucine 609 to leucine 636. Topologically, residues asparagine 637 to threonine 665 are extracellular. N-linked (GlcNAc...) asparagine glycosylation is present at asparagine 651. Residues phenylalanine 666 to methionine 685 constitute an intramembrane region (pore-forming). The Selectivity filter signature appears at glycine 679 to aspartate 682. Aspartate 682 is a Ca(2+) binding site. Residues leucine 686 to valine 693 lie on the Extracellular side of the membrane. A helical transmembrane segment spans residues valine 694–valine 722. Residues glycine 723 to leucine 871 are Cytoplasmic-facing. A Phosphotyrosine; by SRC-type Tyr-kinases modification is found at tyrosine 805. The segment at histidine 812–glutamate 831 is interaction with calmodulin and ITPR3. Serine 824 is modified (phosphoserine; by PKC and PKA). Positions asparagine 850–leucine 871 are disordered.

This sequence belongs to the transient receptor (TC 1.A.4) family. TrpV subfamily. TRPV4 sub-subfamily. In terms of assembly, homotetramer. Interacts with calmodulin. Interacts with CTNNB1. The TRPV4 and CTNNB1 complex can interact with CDH1. Part of a complex containing MLC1, AQP4, HEPACAM and ATP1B1. Interacts with MAP7 and Src family Tyr protein kinases LYN, SRC, FYN, HCK, LCK and YES. Interacts with PACSIN1, PACSIN2 and PACSIN3 (via SH3 domain). Interacts with ITPR3. Interacts with AQP5; the interaction is probably indirect and regulates TRPV4 activation by hypotonicity. Interacts with ANO1. Interacts (via C-terminus) with PKD2 (via C-terminus). Interacts with DDX3X; this interaction is decreased when the channel is activated. N-glycosylated. In terms of tissue distribution, detected in liver, kidney, heart, brain cortex, cerebellum and brainstem (at protein level). Expressed in salivary glands (at protein level). Expressed in heart, lung, spleen, liver, kidney, brain, skeletal muscle and testis. In the central nervous system, expressed in the lamina terminalis (arched vascular organ and neurons of the subfornical organ), median preoptic area, ventral hippocampal commissure, and ependymal cells of the choroid plexus. In the cochlea, expressed in both inner and outer hair cells, and in marginal cells of the cochlear stria vascularis. Expressed in large neurons of the trigeminal ganglion. In the kidney cortex, strongly expressed by epithelial cells of tubules and much weaker in glomeruli.

Its subcellular location is the cell membrane. It is found in the apical cell membrane. The protein resides in the cell junction. It localises to the adherens junction. The protein localises to the cell projection. Its subcellular location is the cilium. The enzyme catalyses Ca(2+)(in) = Ca(2+)(out). Non-selective calcium permeant cation channel involved in osmotic sensitivity and mechanosensitivity. Activation by exposure to hypotonicity within the physiological range exhibits an outward rectification. Also activated by heat, low pH, citrate and phorbol esters. Increase of intracellular Ca(2+) potentiates currents. Channel activity seems to be regulated by a calmodulin-dependent mechanism with a negative feedback mechanism. Acts as a regulator of intracellular Ca(2+) in synoviocytes. Plays an obligatory role as a molecular component in the nonselective cation channel activation induced by 4-alpha-phorbol 12,13-didecanoate and hypotonic stimulation in synoviocytes and also regulates production of IL-8. Together with PKD2, forms mechano- and thermosensitive channels in cilium. Promotes cell-cell junction formation in skin keratinocytes and plays an important role in the formation and/or maintenance of functional intercellular barriers. Negatively regulates expression of PPARGC1A, UCP1, oxidative metabolism and respiration in adipocytes. Regulates expression of chemokines and cytokines related to pro-inflammatory pathway in adipocytes. Together with AQP5, controls regulatory volume decrease in salivary epithelial cells. Required for normal development and maintenance of bone and cartilage. In its inactive state, may sequester DDX3X at the plasma membrane. When activated, the interaction between both proteins is affected and DDX3X relocalizes to the nucleus. In neurons of the central nervous system, could play a role in triggering voluntary water intake in response to increased sodium concentration in body fluid. The polypeptide is Transient receptor potential cation channel subfamily V member 4 (Trpv4) (Mus musculus (Mouse)).